The chain runs to 426 residues: Serine--tRNA ligase (426 aa).

233-235 (TAE) contacts L-serine. Residue 264–266 (RRE) participates in ATP binding. E287 lines the L-serine pocket. 351–354 (EISS) lines the ATP pocket. An L-serine-binding site is contributed by S386.

The protein belongs to the class-II aminoacyl-tRNA synthetase family. Type-1 seryl-tRNA synthetase subfamily. Homodimer. The tRNA molecule binds across the dimer.

The protein localises to the cytoplasm. It carries out the reaction tRNA(Ser) + L-serine + ATP = L-seryl-tRNA(Ser) + AMP + diphosphate + H(+). It catalyses the reaction tRNA(Sec) + L-serine + ATP = L-seryl-tRNA(Sec) + AMP + diphosphate + H(+). It functions in the pathway aminoacyl-tRNA biosynthesis; selenocysteinyl-tRNA(Sec) biosynthesis; L-seryl-tRNA(Sec) from L-serine and tRNA(Sec): step 1/1. Functionally, catalyzes the attachment of serine to tRNA(Ser). Is also able to aminoacylate tRNA(Sec) with serine, to form the misacylated tRNA L-seryl-tRNA(Sec), which will be further converted into selenocysteinyl-tRNA(Sec). The polypeptide is Serine--tRNA ligase (Thermosipho africanus (strain TCF52B)).